Consider the following 301-residue polypeptide: N-acetylmuramic acid 6-phosphate etherase (301 aa).

In terms of domain architecture, SIS spans 57-220 (IAEAFRQGGR…TTGAMIRTGK (164 aa)). Glu85 serves as the catalytic Proton donor. Residue Glu116 is part of the active site.

Belongs to the GCKR-like family. MurNAc-6-P etherase subfamily. Homodimer.

The enzyme catalyses N-acetyl-D-muramate 6-phosphate + H2O = N-acetyl-D-glucosamine 6-phosphate + (R)-lactate. It participates in amino-sugar metabolism; 1,6-anhydro-N-acetylmuramate degradation. Its pathway is amino-sugar metabolism; N-acetylmuramate degradation. The protein operates within cell wall biogenesis; peptidoglycan recycling. Specifically catalyzes the cleavage of the D-lactyl ether substituent of MurNAc 6-phosphate, producing GlcNAc 6-phosphate and D-lactate. Together with AnmK, is also required for the utilization of anhydro-N-acetylmuramic acid (anhMurNAc) either imported from the medium or derived from its own cell wall murein, and thus plays a role in cell wall recycling. The polypeptide is N-acetylmuramic acid 6-phosphate etherase (Photorhabdus laumondii subsp. laumondii (strain DSM 15139 / CIP 105565 / TT01) (Photorhabdus luminescens subsp. laumondii)).